Here is a 284-residue protein sequence, read N- to C-terminus: Elongation factor Ts (284 aa).

Positions 80-83 (TDFV) are involved in Mg(2+) ion dislocation from EF-Tu.

Belongs to the EF-Ts family.

The protein localises to the cytoplasm. In terms of biological role, associates with the EF-Tu.GDP complex and induces the exchange of GDP to GTP. It remains bound to the aminoacyl-tRNA.EF-Tu.GTP complex up to the GTP hydrolysis stage on the ribosome. This chain is Elongation factor Ts, found in Photobacterium profundum (strain SS9).